The sequence spans 176 residues: Ribosome rescue factor SmrB (176 aa).

The Smr domain maps to 93 to 168 (LDLHGYRQSE…GDAALLVLID (76 aa)).

It belongs to the SmrB family. In terms of assembly, associates with collided ribosomes, but not with correctly translating polysomes.

Its function is as follows. Acts as a ribosome collision sensor. Detects stalled/collided disomes (pairs of ribosomes where the leading ribosome is stalled and a second ribosome has collided with it) and endonucleolytically cleaves mRNA at the 5' boundary of the stalled ribosome. Stalled/collided disomes form a new interface (primarily via the 30S subunits) that binds SmrB. Cleaved mRNA becomes available for tmRNA ligation, leading to ribosomal subunit dissociation and rescue of stalled ribosomes. The polypeptide is Ribosome rescue factor SmrB (Shewanella sp. (strain ANA-3)).